Consider the following 141-residue polypeptide: Cystatin-SA (141 aa).

The signal sequence occupies residues 1–20; that stretch reads MAWPLCTLLLLLATQAVALA. The Secondary area of contact motif lies at 76-80; sequence QIVGG. Disulfide bonds link Cys-94–Cys-104 and Cys-118–Cys-138.

In terms of tissue distribution, expressed in submandibular and sublingual saliva but not in parotid saliva (at protein level). Expressed in submandibular gland and parotid gland.

The protein resides in the secreted. Functionally, thiol protease inhibitor. The protein is Cystatin-SA (CST2) of Homo sapiens (Human).